Here is a 479-residue protein sequence, read N- to C-terminus: Putative F-box protein At1g67390 (479 aa).

In terms of domain architecture, F-box spans 40-88 (DDRISKLPDDVLVMILASLSTEDALKTSVLSTRWKNVWKQVPYLHFDLL).

This Arabidopsis thaliana (Mouse-ear cress) protein is Putative F-box protein At1g67390.